A 638-amino-acid chain; its full sequence is Growth hormone receptor (638 aa).

The signal sequence occupies residues 1 to 18; the sequence is MDLWQLLLTLALAGSSDA. Over 19 to 264 the chain is Extracellular; that stretch reads FSGSEATAAI…SQFTCEEDFY (246 aa). Asparagine 46 carries an N-linked (GlcNAc...) asparagine glycan. Intrachain disulfides connect cysteine 56–cysteine 66 and cysteine 101–cysteine 112. N-linked (GlcNAc...) asparagine glycosylation occurs at asparagine 115. Residues cysteine 126 and cysteine 140 are joined by a disulfide bond. A Fibronectin type-III domain is found at 151-254; sequence PPIALNWTLL…EVLYVTLPQM (104 aa). 3 N-linked (GlcNAc...) asparagine glycosylation sites follow: asparagine 156, asparagine 161, and asparagine 200. The short motif at 240-244 is the WSXWS motif element; that stretch reads YGEFS. Positions 260 to 262 are required for ADAM17-mediated proteolysis; sequence EED. Residues 265–288 traverse the membrane as a helical segment; the sequence is FPWLLIIIFGIFGLTVMLFVFLFS. At 289-638 the chain is on the cytoplasmic side; it reads KQQRIKMLIL…STDQLNKIMP (350 aa). The segment at 294-379 is required for JAK2 binding; it reads KMLILPPVPV…HEKSHSNLGV (86 aa). Residues 297–305 carry the Box 1 motif motif; it reads ILPPVPVPK. Positions 340 to 349 match the UbE motif motif; that stretch reads DSWVEFIELD. The residue at position 341 (serine 341) is a Phosphoserine. The disordered stretch occupies residues 353–391; the sequence is PDEKTEESDTDRLLSSDHEKSHSNLGVKDGDSGRTSCCE. Over residues 362–384 the composition is skewed to basic and acidic residues; that stretch reads TDRLLSSDHEKSHSNLGVKDGDS. Phosphotyrosine; by JAK2 is present on residues tyrosine 487 and tyrosine 595.

It belongs to the type I cytokine receptor family. Type 1 subfamily. On growth hormone (GH) binding, forms homodimers and binds JAK2 via a box 1-containing domain. Post-translationally, the soluble form (GHBP) is produced by phorbol ester-promoted proteolytic cleavage at the cell surface (shedding) by ADAM17/TACE. Shedding is inhibited by growth hormone (GH) binding to the receptor probably due to a conformational change in GHR rendering the receptor inaccessible to ADAM17. In terms of processing, on GH binding, phosphorylated on tyrosine residues in the cytoplasmic domain by JAK2. Ubiquitinated by the ECS(SOCS2) complex following ligand-binding and phosphorylation by JAK2, leading to its degradation by the proteasome. Regulation by the ECS(SOCS2) complex acts as a negative feedback loop of growth hormone receptor signaling. Ubiquitination is not sufficient for GHR internalization. Expressed in various tissues with high expression in liver and skeletal muscle. As to expression, isoform 2 is expressed in lung, stomach and muscle. In terms of tissue distribution, predominantly expressed in kidney, bladder, adrenal gland and brain stem. Highly expressed in placental villi.

Its subcellular location is the cell membrane. It is found in the secreted. Receptor for pituitary gland growth hormone (GH1) involved in regulating postnatal body growth. On ligand binding, couples to the JAK2/STAT5 pathway. In terms of biological role, the soluble form (GHBP) acts as a reservoir of growth hormone in plasma and may be a modulator/inhibitor of GH signaling. Functionally, up-regulates the production of the soluble Growth hormone-binding protein form (GHBP) and acts as a negative inhibitor of growth hormone signaling. The polypeptide is Growth hormone receptor (GHR) (Homo sapiens (Human)).